A 345-amino-acid chain; its full sequence is Serine proteinase inhibitor 2 (345 aa).

The protein belongs to the serpin family. Poxviruses subfamily.

The protein localises to the host cytoplasm. Functionally, viral serpin that inhibits both cysteine and serine proteinases involved in the regulation of host inflammatory and apoptosis processes. Major anti-apoptotic protein which inhibits both intrinsic and extrinsic pathways and strongly cleaves host CASP1 and CASP8 but is a rather poor inhibitor of host CASP3. Prevents the proteolytic activity of host interleukin-1-beta converting enzyme (ICE) and ICE-like enzymes. Can also block apoptosis through host tumor necrosis factor (TNF) receptor. The inhibition of host ICE is an example of a 'cross-class' interaction, in which a serpin inhibits a non-serine proteinase. Also inhibits granzyme B. This is Serine proteinase inhibitor 2 (OPG199) from Rabbitpox virus (strain Utrecht) (RPV).